A 426-amino-acid polypeptide reads, in one-letter code: Phosphomethylpyrimidine synthase (426 aa).

Substrate-binding positions include Asn65, Met94, Tyr123, His162, 184–186, 225–228, and Glu264; these read SRG and DGMR. His268 is a Zn(2+) binding site. Tyr291 contributes to the substrate binding site. Residue His332 participates in Zn(2+) binding. Residues Cys408, Cys411, and Cys415 each contribute to the [4Fe-4S] cluster site.

Belongs to the ThiC family. [4Fe-4S] cluster is required as a cofactor.

The catalysed reaction is 5-amino-1-(5-phospho-beta-D-ribosyl)imidazole + S-adenosyl-L-methionine = 4-amino-2-methyl-5-(phosphooxymethyl)pyrimidine + CO + 5'-deoxyadenosine + formate + L-methionine + 3 H(+). Its pathway is cofactor biosynthesis; thiamine diphosphate biosynthesis. Catalyzes the synthesis of the hydroxymethylpyrimidine phosphate (HMP-P) moiety of thiamine from aminoimidazole ribotide (AIR) in a radical S-adenosyl-L-methionine (SAM)-dependent reaction. This is Phosphomethylpyrimidine synthase from Methanococcus maripaludis (strain DSM 14266 / JCM 13030 / NBRC 101832 / S2 / LL).